Consider the following 335-residue polypeptide: Phosphate acyltransferase (335 aa).

It belongs to the PlsX family. In terms of assembly, homodimer. Probably interacts with PlsY.

It localises to the cytoplasm. It catalyses the reaction a fatty acyl-[ACP] + phosphate = an acyl phosphate + holo-[ACP]. It participates in lipid metabolism; phospholipid metabolism. In terms of biological role, catalyzes the reversible formation of acyl-phosphate (acyl-PO(4)) from acyl-[acyl-carrier-protein] (acyl-ACP). This enzyme utilizes acyl-ACP as fatty acyl donor, but not acyl-CoA. In Desulfitobacterium hafniense (strain Y51), this protein is Phosphate acyltransferase.